Here is a 94-residue protein sequence, read N- to C-terminus: Cystatin-A3 (94 aa).

The short motif at 46–50 (QLVNG) is the Secondary area of contact element.

Belongs to the cystatin family.

It is found in the cytoplasm. In terms of biological role, intracellular thiol proteinase inhibitor. The polypeptide is Cystatin-A3 (cpiC) (Dictyostelium discoideum (Social amoeba)).